We begin with the raw amino-acid sequence, 165 residues long: Sec-independent protein translocase protein TatB (165 aa).

A helical transmembrane segment spans residues M1–G21. Polar residues predominate over residues D67 to L84. Positions D67 to T165 are disordered. Low complexity predominate over residues K127–P159.

The protein belongs to the TatB family. The Tat system comprises two distinct complexes: a TatABC complex, containing multiple copies of TatA, TatB and TatC subunits, and a separate TatA complex, containing only TatA subunits. Substrates initially bind to the TatABC complex, which probably triggers association of the separate TatA complex to form the active translocon.

Its subcellular location is the cell inner membrane. Its function is as follows. Part of the twin-arginine translocation (Tat) system that transports large folded proteins containing a characteristic twin-arginine motif in their signal peptide across membranes. Together with TatC, TatB is part of a receptor directly interacting with Tat signal peptides. TatB may form an oligomeric binding site that transiently accommodates folded Tat precursor proteins before their translocation. This chain is Sec-independent protein translocase protein TatB, found in Bordetella avium (strain 197N).